Consider the following 122-residue polypeptide: MIQSFTRLNVADNSGAKEIMAIKVLGGSKRRYASVGDVIVASVKKALPNGKVKKGQVVKAVVVRTKKEIQRENGSLIRFDDNAAVILDNKNEPIGTRIFGPVAREVRYKNFMKIVSLAPEVL.

This sequence belongs to the universal ribosomal protein uL14 family. Part of the 50S ribosomal subunit. Forms a cluster with proteins L3 and L19. In the 70S ribosome, L14 and L19 interact and together make contacts with the 16S rRNA in bridges B5 and B8.

Its function is as follows. Binds to 23S rRNA. Forms part of two intersubunit bridges in the 70S ribosome. This Nitratiruptor sp. (strain SB155-2) protein is Large ribosomal subunit protein uL14.